The sequence spans 217 residues: AFG2-interacting ribosome maturation factor (217 aa).

Part of the 55LCC heterohexameric ATPase complex composed at least of AIRIM, AFG2A, AFG2B and CINP. Does not associate with pre-60S ribosomal particles. Phosphorylated on serines by CK2 kinase.

It is found in the nucleus. It localises to the cytoplasm. Part of the 55LCC heterohexameric ATPase complex which is chromatin-associated and promotes replisome proteostasis to maintain replication fork progression and genome stability. Required for replication fork progression, sister chromatid cohesion, and chromosome stability. The ATPase activity is specifically enhanced by replication fork DNA and is coupled to cysteine protease-dependent cleavage of replisome substrates in response to replication fork damage. Uses ATPase activity to process replisome substrates in S-phase, facilitating their proteolytic turnover from chromatin to ensure DNA replication and mitotic fidelity. Involved in the cytoplasmic maturation steps of pre-60S ribosomal particles by promoting the release of shuttling protein RSL24D1/RLP24 from the pre-ribosomal particles. In Mus musculus (Mouse), this protein is AFG2-interacting ribosome maturation factor (Airim).